The primary structure comprises 230 residues: Cytidylate kinase (230 aa).

Residue 16-24 (GPASAGKST) participates in ATP binding.

Belongs to the cytidylate kinase family. Type 1 subfamily.

It is found in the cytoplasm. The enzyme catalyses CMP + ATP = CDP + ADP. It catalyses the reaction dCMP + ATP = dCDP + ADP. The chain is Cytidylate kinase from Lactobacillus johnsonii (strain CNCM I-12250 / La1 / NCC 533).